The following is a 163-amino-acid chain: Transcription elongation factor GreA (163 aa).

Positions Tyr-12–Gln-73 form a coiled coil.

The protein belongs to the GreA/GreB family.

Functionally, necessary for efficient RNA polymerase transcription elongation past template-encoded arresting sites. The arresting sites in DNA have the property of trapping a certain fraction of elongating RNA polymerases that pass through, resulting in locked ternary complexes. Cleavage of the nascent transcript by cleavage factors such as GreA or GreB allows the resumption of elongation from the new 3'terminus. GreA releases sequences of 2 to 3 nucleotides. The sequence is that of Transcription elongation factor GreA from Nitratiruptor sp. (strain SB155-2).